The following is a 269-amino-acid chain: Magnetosome protein MamX (269 aa).

At 1-10 (MNTKAVAHPD) the chain is on the cytoplasmic side. The chain crosses the membrane as a helical span at residues 11–31 (IAVWIMALGIAFSMALVLTAL). Topologically, residues 32-269 (FNANPWEDHT…NVGGVDAEER (238 aa)) are lumenal. The MCR (magnetochrome) 1 signature appears at 48-71 (IVAGMAAPHRDGREKMVCSSCHIV). Residues Cys-65, Cys-68, His-69, Cys-104, Cys-107, and His-108 each coordinate heme. Residues 87–110 (IVEGTPAPHVDGREKMACASCHTI) carry the MCR 2 motif.

It belongs to the magnetosome MamX family. In terms of assembly, probably interacts with FtsZ-like and MamY proteins. Requires heme as cofactor.

It localises to the magnetosome membrane. In terms of biological role, required for correct biomineralization of the magnetosome, maybe via redox control. May function with MamY, MamZ amd Mms6 in biomineralization. The sequence is that of Magnetosome protein MamX from Magnetospirillum gryphiswaldense (strain DSM 6361 / JCM 21280 / NBRC 15271 / MSR-1).